Consider the following 143-residue polypeptide: Probable cyclic pyranopterin monophosphate synthase (143 aa).

Substrate-binding positions include 61–63 and 97–98; these read YCH and ME. Residue D112 is part of the active site.

This sequence belongs to the MoaC family. As to quaternary structure, homohexamer; trimer of dimers.

It catalyses the reaction (8S)-3',8-cyclo-7,8-dihydroguanosine 5'-triphosphate = cyclic pyranopterin phosphate + diphosphate. It functions in the pathway cofactor biosynthesis; molybdopterin biosynthesis. Functionally, catalyzes the conversion of (8S)-3',8-cyclo-7,8-dihydroguanosine 5'-triphosphate to cyclic pyranopterin monophosphate (cPMP). The chain is Probable cyclic pyranopterin monophosphate synthase from Thermoplasma acidophilum (strain ATCC 25905 / DSM 1728 / JCM 9062 / NBRC 15155 / AMRC-C165).